The following is a 188-amino-acid chain: Archaetidylinositol phosphate synthase (188 aa).

Transmembrane regions (helical) follow at residues 20-40 (LASLGITPNQLTIIGFLITLL) and 51-71 (ILAGIILAVGAFLDALDGALA). Residues aspartate 64, aspartate 67, aspartate 85, and aspartate 89 each contribute to the Mg(2+) site. Residue aspartate 89 is the Proton acceptor of the active site. A run of 2 helical transmembrane segments spans residues 96-116 (ILFGIALGGLVRWDVTFLTLI) and 147-167 (IIIIFIASLFNAVKIGVYLVA).

The protein belongs to the CDP-alcohol phosphatidyltransferase class-I family. Requires Mn(2+) as cofactor. The cofactor is Mg(2+).

It localises to the cell membrane. The enzyme catalyses CDP-2,3-bis-O-(phytanyl)-sn-glycerol + 1D-myo-inositol 3-phosphate = saturated 1-archaetidyl-1D-myo-inositol 3-phosphate + CMP + H(+). The protein operates within lipid metabolism; phospholipid metabolism. Catalyzes the formation of archaetidylinositol phosphate (AIP) from CDP-archaeol (CDP-ArOH or CDP-2,3-bis-(O-phytanyl)-sn-glycerol) and 1L-myo-inositol 1-phosphate (IP or 1D-myo-inositol 3-phosphate). AIP is a precursor of archaetidyl-myo-inositol (AI), an ether-type inositol phospholipid ubiquitously distributed in archaea membranes and essential for glycolipid biosynthesis in archaea. The polypeptide is Archaetidylinositol phosphate synthase (Pyrococcus horikoshii (strain ATCC 700860 / DSM 12428 / JCM 9974 / NBRC 100139 / OT-3)).